The primary structure comprises 638 residues: Octopamine receptor 1 (638 aa).

The Extracellular segment spans residues 1–28; it reads MSRDIFMKRLRLHLLFDEVAMVTHIVGD. Residues 29 to 53 form a helical membrane-spanning segment; it reads VLSSVLLCAVVLLVLVGNTLVVAAV. Topologically, residues 54–64 are cytoplasmic; the sequence is ATSRKLRTVTN. A helical transmembrane segment spans residues 65–87; that stretch reads VFIVNLACADLLLGVLVLPFSAV. At 88–102 the chain is on the extracellular side; it reads NEIKDVWIFGHVWCQ. C101 and C230 are disulfide-bonded. Residues 103–124 form a helical membrane-spanning segment; it reads VWLAVDVWLCTASILNLCCISL. Topologically, residues 125–147 are cytoplasmic; sequence DRYLAITRPIRYPGLMSAKRAKT. Residues 148–167 traverse the membrane as a helical segment; it reads LVAGVWLFSFVICCPPLIGW. The Extracellular portion of the chain corresponds to 168–239; the sequence is NDGGDGIMDY…CELTNSRGYR (72 aa). Residues N178, N207, and N215 are each glycosylated (N-linked (GlcNAc...) asparagine). The helical transmembrane segment at 240 to 259 threads the bilayer; that stretch reads IYAALGSFFIPMLVMVFFYL. Residues 260–520 lie on the Cytoplasmic side of the membrane; sequence QIYRAAVKTI…FNREKKAAKT (261 aa). A helical transmembrane segment spans residues 521–545; that stretch reads LAIIVGAFIMCWMPFFTIYLVGAFC. Topologically, residues 546-551 are extracellular; it reads ENCISP. The chain crosses the membrane as a helical span at residues 552-575; sequence IVFSVAFWLGYCNSAMNPCVYALF. Residues 576-638 are Cytoplasmic-facing; it reads SRDFRFAFRK…TASGGNGGYT (63 aa). The segment at 618–638 is disordered; it reads DDAKSSSDIGPTASGGNGGYT.

It belongs to the G-protein coupled receptor 1 family. In terms of tissue distribution, expressed in the central nervous system.

It localises to the cell membrane. In terms of biological role, G-protein coupled receptor for octopamine (OA), which is a neurotransmitter, neurohormone, and neuromodulator in invertebrates. Activation of this receptor by octopamine induces an increase in both inositol phosphates and cyclic AMP. The coupling to adenylyl cyclase seems to be less efficient than the coupling to phospholipase C. The rank order of potency for agonists is p-synephrine &gt;= clonidine &gt; p-octopamine = xylometazoline = phenylephrine = oxymetazoline &gt; B-HT920 &gt; serotonin = p-tyramine &gt; epinephrine &gt; norepinephrine &gt; methoxamine = dopamine = histamine. For antagonists, the rank order is yohimbine &gt; chlopromazine / spiperone &gt; phentolamine &gt; mianserine &gt; rauwolscine &gt; prazosin &gt; alprenolol / propanolol &gt; pindolol. This Lymnaea stagnalis (Great pond snail) protein is Octopamine receptor 1.